Reading from the N-terminus, the 385-residue chain is Arginine biosynthesis bifunctional protein ArgJ (385 aa).

Thr-142, Lys-168, Thr-179, Glu-259, Asn-380, and Thr-385 together coordinate substrate. Thr-179 functions as the Nucleophile in the catalytic mechanism.

It belongs to the ArgJ family. Heterotetramer of two alpha and two beta chains.

It is found in the cytoplasm. The enzyme catalyses N(2)-acetyl-L-ornithine + L-glutamate = N-acetyl-L-glutamate + L-ornithine. It carries out the reaction L-glutamate + acetyl-CoA = N-acetyl-L-glutamate + CoA + H(+). It functions in the pathway amino-acid biosynthesis; L-arginine biosynthesis; L-ornithine and N-acetyl-L-glutamate from L-glutamate and N(2)-acetyl-L-ornithine (cyclic): step 1/1. The protein operates within amino-acid biosynthesis; L-arginine biosynthesis; N(2)-acetyl-L-ornithine from L-glutamate: step 1/4. In terms of biological role, catalyzes two activities which are involved in the cyclic version of arginine biosynthesis: the synthesis of N-acetylglutamate from glutamate and acetyl-CoA as the acetyl donor, and of ornithine by transacetylation between N(2)-acetylornithine and glutamate. The protein is Arginine biosynthesis bifunctional protein ArgJ of Leptospira interrogans serogroup Icterohaemorrhagiae serovar Lai (strain 56601).